The chain runs to 504 residues: Sperm motility kinase 3A (504 aa).

The 249-residue stretch at 28–276 (YVMLETIGHG…VAEVMVHPWV (249 aa)) folds into the Protein kinase domain. Residues 34-42 (IGHGGCATV) and Lys57 contribute to the ATP site. The active-site Proton acceptor is the Asp147. The UBA domain occupies 294 to 334 (KPDPAIVKAMGHIGFQAQDIEDSLRQRKFNQTMASYCLLKK). 2 disordered regions span residues 389-421 (VCGK…MDHT) and 441-468 (NSSE…WPRG). Residues 441–451 (NSSEESTQGHT) are compositionally biased toward polar residues.

The protein belongs to the protein kinase superfamily. CAMK Ser/Thr protein kinase family. Smok subfamily. Testis-specific. Expressed in the testis from 22 days postpartum (22 dpp).

It carries out the reaction L-seryl-[protein] + ATP = O-phospho-L-seryl-[protein] + ADP + H(+). It catalyses the reaction L-threonyl-[protein] + ATP = O-phospho-L-threonyl-[protein] + ADP + H(+). May play a role in sperm motility, especially in the regulation of flagellar function. The chain is Sperm motility kinase 3A from Mus musculus (Mouse).